The chain runs to 625 residues: DNA-directed RNA polymerase subunit gamma (625 aa).

Cys-71, Cys-73, Cys-86, and Cys-89 together coordinate Zn(2+). 3 residues coordinate Mg(2+): Asp-467, Asp-469, and Asp-471.

It belongs to the RNA polymerase beta' chain family. RpoC1 subfamily. As to quaternary structure, in cyanobacteria the RNAP catalytic core is composed of 2 alpha, 1 beta, 1 beta', 1 gamma and 1 omega subunit. When a sigma factor is associated with the core the holoenzyme is formed, which can initiate transcription. It depends on Mg(2+) as a cofactor. Zn(2+) serves as cofactor.

It carries out the reaction RNA(n) + a ribonucleoside 5'-triphosphate = RNA(n+1) + diphosphate. In terms of biological role, DNA-dependent RNA polymerase catalyzes the transcription of DNA into RNA using the four ribonucleoside triphosphates as substrates. This chain is DNA-directed RNA polymerase subunit gamma, found in Trichormus variabilis (strain ATCC 29413 / PCC 7937) (Anabaena variabilis).